The chain runs to 333 residues: Adenosine deaminase (333 aa).

The Zn(2+) site is built by histidine 12 and histidine 14. Substrate contacts are provided by histidine 14, aspartate 16, and glycine 170. Histidine 197 is a Zn(2+) binding site. Glutamate 200 serves as the catalytic Proton donor. Residue aspartate 278 coordinates Zn(2+). Position 279 (aspartate 279) interacts with substrate.

It belongs to the metallo-dependent hydrolases superfamily. Adenosine and AMP deaminases family. Adenosine deaminase subfamily. Zn(2+) is required as a cofactor.

It catalyses the reaction adenosine + H2O + H(+) = inosine + NH4(+). The enzyme catalyses 2'-deoxyadenosine + H2O + H(+) = 2'-deoxyinosine + NH4(+). In terms of biological role, catalyzes the hydrolytic deamination of adenosine and 2-deoxyadenosine. The polypeptide is Adenosine deaminase (Escherichia coli O7:K1 (strain IAI39 / ExPEC)).